We begin with the raw amino-acid sequence, 1496 residues long: DNA-directed RNA polymerase subunit beta' (1496 aa).

Positions 67, 69, 82, and 85 each coordinate Zn(2+). Mg(2+) contacts are provided by Asp-499, Asp-501, and Asp-503. Residues Cys-867, Cys-943, Cys-950, and Cys-953 each coordinate Zn(2+).

It belongs to the RNA polymerase beta' chain family. In terms of assembly, the RNAP catalytic core consists of 2 alpha, 1 beta, 1 beta' and 1 omega subunit. When a sigma factor is associated with the core the holoenzyme is formed, which can initiate transcription. It depends on Mg(2+) as a cofactor. Zn(2+) serves as cofactor.

It catalyses the reaction RNA(n) + a ribonucleoside 5'-triphosphate = RNA(n+1) + diphosphate. Functionally, DNA-dependent RNA polymerase catalyzes the transcription of DNA into RNA using the four ribonucleoside triphosphates as substrates. This chain is DNA-directed RNA polymerase subunit beta', found in Chlorobium limicola (strain DSM 245 / NBRC 103803 / 6330).